A 165-amino-acid chain; its full sequence is MKNRILRPALLCVAALFATTAQADAGHDHGSAHAGAHAHDADTPYGRPGDAAKAQRTVRVVMSDTMRFDPATITVRRGETVRFVAANGGRIEHEFVLGTTASLKAHAQEMRAMPDMQHADPGAVRVAAGASGEIVWQFTKAGSFEFACLIPGHFEAGMVGKVVVR.

The first 23 residues, 1–23, serve as a signal peptide directing secretion; the sequence is MKNRILRPALLCVAALFATTAQA. The span at 25 to 42 shows a compositional bias: basic and acidic residues; it reads AGHDHGSAHAGAHAHDAD. A disordered region spans residues 25 to 50; it reads AGHDHGSAHAGAHAHDADTPYGRPGD. Residues His93, Cys148, His153, and Met158 each contribute to the Cu(2+) site.

The protein belongs to the CopI family. In terms of assembly, monomer.

It localises to the periplasm. Its function is as follows. Involved in copper tolerance. Required for copper resistance under both aerobic and anaerobic photosynthetic growth conditions. Binds copper. Could be an important defense against copper in the periplasm and may protect not only c type cytochromes but also other proteins with cysteine residues from copper ions that may catalyze nonnative disulfide bond formation. This is Copper-resistant cuproprotein CopI from Rubrivivax gelatinosus (Rhodocyclus gelatinosus).